The following is an 87-amino-acid chain: Small ribosomal subunit protein uS17 (87 aa).

It belongs to the universal ribosomal protein uS17 family. Part of the 30S ribosomal subunit.

Its function is as follows. One of the primary rRNA binding proteins, it binds specifically to the 5'-end of 16S ribosomal RNA. The protein is Small ribosomal subunit protein uS17 of Thiobacillus denitrificans (strain ATCC 25259 / T1).